The following is a 218-amino-acid chain: 3-dehydroquinate dehydratase (218 aa).

3-dehydroquinate-binding positions include 29–31 and Arg56; that span reads EFR. His116 serves as the catalytic Proton donor/acceptor. Lys142 (schiff-base intermediate with substrate) is an active-site residue. Arg180, Ser200, and Gln204 together coordinate 3-dehydroquinate.

Belongs to the type-I 3-dehydroquinase family. As to quaternary structure, homodimer.

It catalyses the reaction 3-dehydroquinate = 3-dehydroshikimate + H2O. The protein operates within metabolic intermediate biosynthesis; chorismate biosynthesis; chorismate from D-erythrose 4-phosphate and phosphoenolpyruvate: step 3/7. Involved in the third step of the chorismate pathway, which leads to the biosynthesis of aromatic amino acids. Catalyzes the cis-dehydration of 3-dehydroquinate (DHQ) and introduces the first double bond of the aromatic ring to yield 3-dehydroshikimate. The protein is 3-dehydroquinate dehydratase of Methanococcus maripaludis (strain DSM 14266 / JCM 13030 / NBRC 101832 / S2 / LL).